A 304-amino-acid polypeptide reads, in one-letter code: ATP synthase gamma chain (304 aa).

It belongs to the ATPase gamma chain family. As to quaternary structure, F-type ATPases have 2 components, CF(1) - the catalytic core - and CF(0) - the membrane proton channel. CF(1) has five subunits: alpha(3), beta(3), gamma(1), delta(1), epsilon(1). CF(0) has three main subunits: a, b and c.

The protein localises to the cell membrane. In terms of biological role, produces ATP from ADP in the presence of a proton gradient across the membrane. The gamma chain is believed to be important in regulating ATPase activity and the flow of protons through the CF(0) complex. The sequence is that of ATP synthase gamma chain from Mycolicibacterium paratuberculosis (strain ATCC BAA-968 / K-10) (Mycobacterium paratuberculosis).